The following is a 653-amino-acid chain: Calpain-10 (653 aa).

The region spanning 13–321 (LFRDAAFPAA…FDEITIGYPI (309 aa)) is the Calpain catalytic domain. Active-site residues include C73, H238, and N263. Domain III regions lie at residues 322 to 494 (TEAG…VSLS) and 513 to 653 (EWGT…PSWQ).

It belongs to the peptidase C2 family.

In terms of biological role, calcium-regulated non-lysosomal thiol-protease which catalyzes limited proteolysis of substrates involved in cytoskeletal remodeling and signal transduction. May play a role in insulin-stimulated glucose uptake. The chain is Calpain-10 (CAPN10) from Macaca fascicularis (Crab-eating macaque).